Here is a 138-residue protein sequence, read N- to C-terminus: MLSPKRTKFRKQHRGRMKGIATRGNSIAFGKFALQALEPSWITSRQIEAGRRAITRYARRGGKLWIRIFPDKPITMRPAETRMGSGKGSPEYWVSVVKPGRILYEISGVPESVARAAMRIAAYKMPIRTQFITAITSV.

The protein belongs to the universal ribosomal protein uL16 family. Part of the 50S ribosomal subunit.

The protein resides in the plastid. The protein localises to the chloroplast. The sequence is that of Large ribosomal subunit protein uL16c from Physcomitrium patens (Spreading-leaved earth moss).